A 95-amino-acid chain; its full sequence is Protein TusB (95 aa).

Belongs to the DsrH/TusB family. As to quaternary structure, heterohexamer, formed by a dimer of trimers. The hexameric TusBCD complex contains 2 copies each of TusB, TusC and TusD. The TusBCD complex interacts with TusE.

It localises to the cytoplasm. Functionally, part of a sulfur-relay system required for 2-thiolation of 5-methylaminomethyl-2-thiouridine (mnm(5)s(2)U) at tRNA wobble positions. In Pectobacterium atrosepticum (strain SCRI 1043 / ATCC BAA-672) (Erwinia carotovora subsp. atroseptica), this protein is Protein TusB.